The primary structure comprises 122 residues: Large ribosomal subunit protein uL14 (122 aa).

It belongs to the universal ribosomal protein uL14 family. As to quaternary structure, part of the 50S ribosomal subunit. Forms a cluster with proteins L3 and L19. In the 70S ribosome, L14 and L19 interact and together make contacts with the 16S rRNA in bridges B5 and B8.

Its function is as follows. Binds to 23S rRNA. Forms part of two intersubunit bridges in the 70S ribosome. In Chlamydia abortus (strain DSM 27085 / S26/3) (Chlamydophila abortus), this protein is Large ribosomal subunit protein uL14.